An 89-amino-acid polypeptide reads, in one-letter code: Small ribosomal subunit protein uS15 (89 aa).

The protein belongs to the universal ribosomal protein uS15 family. In terms of assembly, part of the 30S ribosomal subunit. Forms a bridge to the 50S subunit in the 70S ribosome, contacting the 23S rRNA.

One of the primary rRNA binding proteins, it binds directly to 16S rRNA where it helps nucleate assembly of the platform of the 30S subunit by binding and bridging several RNA helices of the 16S rRNA. Its function is as follows. Forms an intersubunit bridge (bridge B4) with the 23S rRNA of the 50S subunit in the ribosome. The chain is Small ribosomal subunit protein uS15 from Streptococcus equi subsp. zooepidemicus (strain H70).